The chain runs to 226 residues: UPF0758 protein SPs0978 (226 aa).

One can recognise an MPN domain in the interval 103–225 (SVLTSVQVAE…YYSFREKSTL (123 aa)). Positions 174, 176, and 187 each coordinate Zn(2+). The JAMM motif motif lies at 174-187 (HNHPSGNIEPSSND).

The protein belongs to the UPF0758 family.

The sequence is that of UPF0758 protein SPs0978 from Streptococcus pyogenes serotype M3 (strain SSI-1).